Consider the following 264-residue polypeptide: Thymidylate synthase (264 aa).

R21 is a binding site for dUMP. H51 is a (6R)-5,10-methylene-5,6,7,8-tetrahydrofolate binding site. Position 126–127 (126–127 (RR)) interacts with dUMP. C146 (nucleophile) is an active-site residue. Residues 166 to 169 (RSCD), N177, and 207 to 209 (HLY) each bind dUMP. Residue D169 participates in (6R)-5,10-methylene-5,6,7,8-tetrahydrofolate binding. A (6R)-5,10-methylene-5,6,7,8-tetrahydrofolate-binding site is contributed by A263.

It belongs to the thymidylate synthase family. Bacterial-type ThyA subfamily. As to quaternary structure, homodimer.

It is found in the cytoplasm. It catalyses the reaction dUMP + (6R)-5,10-methylene-5,6,7,8-tetrahydrofolate = 7,8-dihydrofolate + dTMP. The protein operates within pyrimidine metabolism; dTTP biosynthesis. Its function is as follows. Catalyzes the reductive methylation of 2'-deoxyuridine-5'-monophosphate (dUMP) to 2'-deoxythymidine-5'-monophosphate (dTMP) while utilizing 5,10-methylenetetrahydrofolate (mTHF) as the methyl donor and reductant in the reaction, yielding dihydrofolate (DHF) as a by-product. This enzymatic reaction provides an intracellular de novo source of dTMP, an essential precursor for DNA biosynthesis. The sequence is that of Thymidylate synthase from Shewanella oneidensis (strain ATCC 700550 / JCM 31522 / CIP 106686 / LMG 19005 / NCIMB 14063 / MR-1).